The primary structure comprises 261 residues: Phosphate import ATP-binding protein PstB (261 aa).

Positions 15-256 (LQVRRLNFYY…PAHQETENYI (242 aa)) constitute an ABC transporter domain. 47–54 (GPSGCGKS) provides a ligand contact to ATP.

It belongs to the ABC transporter superfamily. Phosphate importer (TC 3.A.1.7) family. As to quaternary structure, the complex is composed of two ATP-binding proteins (PstB), two transmembrane proteins (PstC and PstA) and a solute-binding protein (PstS).

It localises to the cell inner membrane. It carries out the reaction phosphate(out) + ATP + H2O = ADP + 2 phosphate(in) + H(+). Its function is as follows. Part of the ABC transporter complex PstSACB involved in phosphate import. Responsible for energy coupling to the transport system. This Burkholderia sp protein is Phosphate import ATP-binding protein PstB.